The sequence spans 127 residues: Calcitonin gene-related peptide 2 (127 aa).

Residues 1–25 form the signal peptide; that stretch reads MGFRKFSPFLALSILVLYQAGSLQA. A propeptide spanning residues 26-79 is cleaved from the precursor; the sequence is APFRSALESSPDPATLSKEDARLLLAALVQDYVQMKASELKQEQETQGSSSAAQ. The cysteines at positions 83 and 88 are disulfide-linked. The residue at position 118 (phenylalanine 118) is a Phenylalanine amide. A propeptide spanning residues 124–127 is cleaved from the precursor; it reads DLQA.

This sequence belongs to the calcitonin family. Expressed in spinal cord, pituitary and thalamus.

It is found in the secreted. Its function is as follows. CALCB/CGRP2 is a peptide hormone that induces vasodilation mediated by the CALCRL-RAMP1 receptor complex. Dilates a variety of vessels including the coronary, cerebral and systemic vasculature. Its abundance in the CNS also points toward a neurotransmitter or neuromodulator role. The chain is Calcitonin gene-related peptide 2 from Homo sapiens (Human).